We begin with the raw amino-acid sequence, 85 residues long: Large ribosomal subunit protein bL27 (85 aa).

The segment covering 1–10 (MAQKKGGGST) has biased composition (gly residues). The disordered stretch occupies residues 1–21 (MAQKKGGGSTRNGRDSQPKML).

The protein belongs to the bacterial ribosomal protein bL27 family.

This is Large ribosomal subunit protein bL27 from Leptothrix cholodnii (strain ATCC 51168 / LMG 8142 / SP-6) (Leptothrix discophora (strain SP-6)).